Reading from the N-terminus, the 331-residue chain is Aromatic 2-oxoacid reductase (331 aa).

Residues 154–155 (RI), aspartate 175, 205–206 (AP), asparagine 211, 232–234 (AAR), and aspartate 258 each bind NAD(+). Residue arginine 234 is part of the active site. Residue glutamate 263 is part of the active site. Histidine 295 acts as the Proton donor in catalysis.

The protein belongs to the D-isomer specific 2-hydroxyacid dehydrogenase family.

It carries out the reaction (R)-3-phenyllactate + NAD(+) = 3-phenylpyruvate + NADH + H(+). The enzyme catalyses (2R)-2-hydroxy-3-(4-hydroxyphenyl)propanoate + NAD(+) = 3-(4-hydroxyphenyl)pyruvate + NADH + H(+). It catalyses the reaction 3-(indol-3-yl)lactate + NAD(+) = indole-3-pyruvate + NADH + H(+). It participates in amino-acid degradation. Its function is as follows. Essential for the reductive metabolism of L-phenylalanine, L-tyrosine and L-tryptophan. Catalyzes the conversion of phenylpyruvic acid to phenyllactic acid, 4-hydroxy-phenylpyruvic acid to 4-hydroxy-phenyllactic acid, and indolepyruvic acid to indolelactic acid. The sequence is that of Aromatic 2-oxoacid reductase from Clostridium sporogenes (strain ATCC 15579).